Reading from the N-terminus, the 619-residue chain is 4-hydroxyphenylalkanoate adenylyltransferase (619 aa).

It belongs to the ATP-dependent AMP-binding enzyme family.

It carries out the reaction 17-(4-hydroxyphenyl)heptadecanoate + holo-[(phenol)carboxyphthiodiolenone synthase] + ATP = 17-(4-hydroxyphenyl)heptadecanoyl-[(phenol)carboxyphthiodiolenone synthase] + AMP + diphosphate. It catalyses the reaction 19-(4-hydroxyphenyl)nonadecanoate + holo-[(phenol)carboxyphthiodiolenone synthase] + ATP = 19-(4-hydroxyphenyl)nonadecanoyl-[(phenol)carboxyphthiodiolenone synthase] + AMP + diphosphate. It functions in the pathway lipid metabolism; fatty acid biosynthesis. In terms of biological role, catalyzes the activation of long-chain fatty acids as acyl-adenylates (acyl-AMP), which are then transferred to the multifunctional polyketide synthase PpsA for further chain extension. Involved in the biosynthesis of phenolphthiocerol, which is an important intermediate in the biosynthesis of phenolic glycolipid (PGL), also called mycosid B. The polypeptide is 4-hydroxyphenylalkanoate adenylyltransferase (fadD29) (Mycobacterium bovis (strain ATCC BAA-935 / AF2122/97)).